Reading from the N-terminus, the 141-residue chain is Large ribosomal subunit protein uL11 (141 aa).

Belongs to the universal ribosomal protein uL11 family. As to quaternary structure, part of the ribosomal stalk of the 50S ribosomal subunit. Interacts with L10 and the large rRNA to form the base of the stalk. L10 forms an elongated spine to which L12 dimers bind in a sequential fashion forming a multimeric L10(L12)X complex. Post-translationally, one or more lysine residues are methylated.

Its function is as follows. Forms part of the ribosomal stalk which helps the ribosome interact with GTP-bound translation factors. This chain is Large ribosomal subunit protein uL11, found in Prochlorococcus marinus (strain MIT 9313).